A 301-amino-acid chain; its full sequence is Tail tube protein (301 aa).

The protein belongs to the skunalikevirus tail tube protein family. Homohexamer. The tube is composed of 31 hexameric rings.

The protein localises to the virion. Functionally, forms the cylindrical rigid tail tube. This chain is Tail tube protein, found in Lactococcus phage F4-1 (Lactococcus lactis bacteriophage F4-1).